Consider the following 1482-residue polypeptide: Pregnancy zone protein (1482 aa).

The N-terminal stretch at methionine 1–serine 25 is a signal peptide. N-linked (GlcNAc...) asparagine glycosylation is found at asparagine 54, asparagine 69, asparagine 246, asparagine 392, and asparagine 406. Residues cysteine 685 to glutamate 735 form a bait region region. N-linked (GlcNAc...) asparagine glycosylation is found at asparagine 753, asparagine 875, and asparagine 932. A cross-link (isoglutamyl cysteine thioester (Cys-Gln)) is located at residues cysteine 978–glutamine 981. N-linked (GlcNAc...) asparagine glycosylation is found at asparagine 997 and asparagine 1430.

Belongs to the protease inhibitor I39 (alpha-2-macroglobulin) family. In terms of assembly, homotetramer, which consists of two pairs of disulfide-linked chains. Plasma. Prominent constituent of late-pregnancy sera.

It is found in the secreted. Is able to inhibit all four classes of proteinases by a unique 'trapping' mechanism. This protein has a peptide stretch, called the 'bait region' which contains specific cleavage sites for different proteinases. When a proteinase cleaves the bait region, a conformational change is induced in the protein which traps the proteinase. The entrapped enzyme remains active against low molecular weight substrates (activity against high molecular weight substrates is greatly reduced). Following cleavage in the bait region a thioester bond is hydrolyzed and mediates the covalent binding of the protein to the proteinase. In Homo sapiens (Human), this protein is Pregnancy zone protein (PZP).